Here is a 318-residue protein sequence, read N- to C-terminus: Trans-prenyltransferase (318 aa).

Residues 1-21 traverse the membrane as a helical segment; it reads MLHLIYISIIVVLIIILISYT. Residues Lys85, Arg88, and His122 each coordinate isopentenyl diphosphate. The Mg(2+) site is built by Asp129 and Asp135. Arg140 contributes to the dimethylallyl diphosphate binding site. Arg141 is a binding site for isopentenyl diphosphate. Dimethylallyl diphosphate-binding residues include Lys216, Thr217, and Gln254.

This sequence belongs to the FPP/GGPP synthase family. Asfivirus trans-prenyltransferase subfamily. Mg(2+) serves as cofactor.

Its subcellular location is the host endoplasmic reticulum. It localises to the host membrane. It catalyses the reaction isopentenyl diphosphate + dimethylallyl diphosphate = (2E)-geranyl diphosphate + diphosphate. The enzyme catalyses isopentenyl diphosphate + (2E)-geranyl diphosphate = (2E,6E)-farnesyl diphosphate + diphosphate. The catalysed reaction is isopentenyl diphosphate + (2E,6E)-farnesyl diphosphate = (2E,6E,10E)-geranylgeranyl diphosphate + diphosphate. It carries out the reaction isopentenyl diphosphate + (2E,6E,10E)-geranylgeranyl diphosphate = (2E,6E,10E,14E)-geranylfarnesyl diphosphate + diphosphate. It participates in isoprenoid biosynthesis; farnesyl diphosphate biosynthesis; farnesyl diphosphate from geranyl diphosphate and isopentenyl diphosphate: step 1/1. The protein operates within isoprenoid biosynthesis; geranyl diphosphate biosynthesis; geranyl diphosphate from dimethylallyl diphosphate and isopentenyl diphosphate: step 1/1. It functions in the pathway isoprenoid biosynthesis; geranylgeranyl diphosphate biosynthesis; geranylgeranyl diphosphate from farnesyl diphosphate and isopentenyl diphosphate: step 1/1. Its function is as follows. Trans-prenyltransferase that catalyzes the sequential condensation of isopentenyl diphosphate (IPP) with different allylic diphosphates, such as dimethylallyl diphosphate (DMAPP), geranyl diphosphate (GPP), farnesyl diphosphate (FPP) and geranylgeranyl diphosphate (GGPP), farnesyl diphosphate being the best allylic substrate. This Ornithodoros (relapsing fever ticks) protein is Trans-prenyltransferase.